A 124-amino-acid chain; its full sequence is UPF0102 protein Haur_0145 (124 aa).

It belongs to the UPF0102 family.

This is UPF0102 protein Haur_0145 from Herpetosiphon aurantiacus (strain ATCC 23779 / DSM 785 / 114-95).